The chain runs to 179 residues: Protein LDB18 (179 aa).

Functionally, may be involved in protein-linked oligosaccharide phosphorylation since the deletion reduces the negative charge of the cell surface. This is Protein LDB18 (LDB18) from Saccharomyces cerevisiae (strain ATCC 204508 / S288c) (Baker's yeast).